The primary structure comprises 331 residues: 6-phosphogluconolactonase (331 aa).

This sequence belongs to the cycloisomerase 2 family.

The enzyme catalyses 6-phospho-D-glucono-1,5-lactone + H2O = 6-phospho-D-gluconate + H(+). Its pathway is carbohydrate degradation; pentose phosphate pathway; D-ribulose 5-phosphate from D-glucose 6-phosphate (oxidative stage): step 2/3. Its function is as follows. Catalyzes the hydrolysis of 6-phosphogluconolactone to 6-phosphogluconate. The chain is 6-phosphogluconolactonase from Buchnera aphidicola subsp. Baizongia pistaciae (strain Bp).